The sequence spans 63 residues: Large ribosomal subunit protein bL28 (63 aa).

It belongs to the bacterial ribosomal protein bL28 family.

In Brachyspira hyodysenteriae (strain ATCC 49526 / WA1), this protein is Large ribosomal subunit protein bL28.